We begin with the raw amino-acid sequence, 169 residues long: Ribosome maturation factor RimM (169 aa).

The region spanning 92–167 is the PRC barrel domain; the sequence is PKDTYFICDI…YMKIKVVEGL (76 aa).

The protein belongs to the RimM family. In terms of assembly, binds ribosomal protein uS19.

It localises to the cytoplasm. Its function is as follows. An accessory protein needed during the final step in the assembly of 30S ribosomal subunit, possibly for assembly of the head region. Essential for efficient processing of 16S rRNA. May be needed both before and after RbfA during the maturation of 16S rRNA. It has affinity for free ribosomal 30S subunits but not for 70S ribosomes. In Caldicellulosiruptor bescii (strain ATCC BAA-1888 / DSM 6725 / KCTC 15123 / Z-1320) (Anaerocellum thermophilum), this protein is Ribosome maturation factor RimM.